The primary structure comprises 238 residues: Ribosomal RNA small subunit methyltransferase G (238 aa).

Residues glycine 106, leucine 111, 157 to 158 (IE), and arginine 170 each bind S-adenosyl-L-methionine.

It belongs to the methyltransferase superfamily. RNA methyltransferase RsmG family.

It localises to the cytoplasm. The enzyme catalyses guanosine(527) in 16S rRNA + S-adenosyl-L-methionine = N(7)-methylguanosine(527) in 16S rRNA + S-adenosyl-L-homocysteine. In terms of biological role, specifically methylates the N7 position of guanine in position 527 of 16S rRNA. This is Ribosomal RNA small subunit methyltransferase G from Psychrobacter arcticus (strain DSM 17307 / VKM B-2377 / 273-4).